The following is a 74-amino-acid chain: Large ribosomal subunit protein bL31 (74 aa).

Zn(2+)-binding residues include Cys-16, Cys-18, Cys-37, and Cys-40.

Belongs to the bacterial ribosomal protein bL31 family. Type A subfamily. In terms of assembly, part of the 50S ribosomal subunit. Zn(2+) serves as cofactor.

In terms of biological role, binds the 23S rRNA. This chain is Large ribosomal subunit protein bL31, found in Nitrosomonas europaea (strain ATCC 19718 / CIP 103999 / KCTC 2705 / NBRC 14298).